Consider the following 363-residue polypeptide: Transcription factor IIIA (363 aa).

C2H2-type zinc fingers lie at residues 38 to 62 (FICS…LCKH), 68 to 92 (FVCD…ILIH), 98 to 123 (FVCA…ERKH), 130 to 154 (YVCN…QCQH), 160 to 184 (FRCT…GKVH), 187 to 211 (YLCQ…REAH), 215 to 237 (VTCT…MKTH), 244 to 269 (YRCP…LSFH), and 275 to 299 (FVCE…SVVH). Residues 301–363 (PDKKRMKLKV…LAPAALLTVH (63 aa)) form a disordered region. A compositionally biased stretch (low complexity) spans 338 to 350 (SLPNSTESSSSPE).

It localises to the nucleus. In terms of biological role, involved in ribosomal large subunit biogenesis. Binds the approximately 50 base pairs internal control region (ICR) of 5S ribosomal RNA genes. It is required for their RNA polymerase III-dependent transcription and may also maintain the transcription of other genes. Also binds the transcribed 5S RNA's. This chain is Transcription factor IIIA (Gtf3a), found in Rattus norvegicus (Rat).